A 98-amino-acid chain; its full sequence is DNA-directed RNA polymerase subunit omega (98 aa).

This sequence belongs to the RNA polymerase subunit omega family. The RNAP catalytic core consists of 2 alpha, 1 beta, 1 beta' and 1 omega subunit. When a sigma factor is associated with the core the holoenzyme is formed, which can initiate transcription.

The enzyme catalyses RNA(n) + a ribonucleoside 5'-triphosphate = RNA(n+1) + diphosphate. Its function is as follows. Promotes RNA polymerase assembly. Latches the N- and C-terminal regions of the beta' subunit thereby facilitating its interaction with the beta and alpha subunits. The protein is DNA-directed RNA polymerase subunit omega of Xylella fastidiosa (strain M12).